Here is a 157-residue protein sequence, read N- to C-terminus: Endoribonuclease YbeY (157 aa).

Residues His-123, His-127, and His-133 each contribute to the Zn(2+) site.

This sequence belongs to the endoribonuclease YbeY family. It depends on Zn(2+) as a cofactor.

The protein resides in the cytoplasm. In terms of biological role, single strand-specific metallo-endoribonuclease involved in late-stage 70S ribosome quality control and in maturation of the 3' terminus of the 16S rRNA. The chain is Endoribonuclease YbeY from Limosilactobacillus fermentum (strain NBRC 3956 / LMG 18251) (Lactobacillus fermentum).